The primary structure comprises 36 residues: Dermonecrotic toxin LgSicTox-beta-LOXN2 (36 aa).

This sequence belongs to the arthropod phospholipase D family. Class II subfamily. Requires Mg(2+) as cofactor. Post-translationally, contains 2 disulfide bonds. As to expression, expressed by the venom gland.

It localises to the secreted. The catalysed reaction is an N-(acyl)-sphingosylphosphocholine = an N-(acyl)-sphingosyl-1,3-cyclic phosphate + choline. The enzyme catalyses an N-(acyl)-sphingosylphosphoethanolamine = an N-(acyl)-sphingosyl-1,3-cyclic phosphate + ethanolamine. It carries out the reaction a 1-acyl-sn-glycero-3-phosphocholine = a 1-acyl-sn-glycero-2,3-cyclic phosphate + choline. It catalyses the reaction a 1-acyl-sn-glycero-3-phosphoethanolamine = a 1-acyl-sn-glycero-2,3-cyclic phosphate + ethanolamine. In terms of biological role, dermonecrotic toxins cleave the phosphodiester linkage between the phosphate and headgroup of certain phospholipids (sphingolipid and lysolipid substrates), forming an alcohol (often choline) and a cyclic phosphate. This toxin acts on sphingomyelin (SM). It may also act on ceramide phosphoethanolamine (CPE), lysophosphatidylcholine (LPC) and lysophosphatidylethanolamine (LPE), but not on lysophosphatidylserine (LPS), and lysophosphatidylglycerol (LPG). It acts by transphosphatidylation, releasing exclusively cyclic phosphate products as second products. Induces dermonecrosis, hemolysis, increased vascular permeability, edema, inflammatory response, and platelet aggregation. This chain is Dermonecrotic toxin LgSicTox-beta-LOXN2, found in Loxosceles gaucho (Spider).